The following is a 485-amino-acid chain: Adenosylhomocysteinase (485 aa).

Residues Thr-64, Asp-139, and Glu-205 each coordinate substrate. Position 206 to 208 (206 to 208) interacts with NAD(+); the sequence is TTT. Substrate-binding residues include Lys-235 and Asp-239. NAD(+) contacts are provided by residues Asn-240, 269–274, Glu-292, Asn-327, 348–350, and Asn-397; these read GYGDVG and IGH.

The protein belongs to the adenosylhomocysteinase family. The cofactor is NAD(+).

The enzyme catalyses S-adenosyl-L-homocysteine + H2O = L-homocysteine + adenosine. The protein operates within amino-acid biosynthesis; L-homocysteine biosynthesis; L-homocysteine from S-adenosyl-L-homocysteine: step 1/1. Its function is as follows. Adenosylhomocysteine is a competitive inhibitor of S-adenosyl-L-methionine-dependent methyl transferase reactions; therefore adenosylhomocysteinase may play a key role in the control of methylations via regulation of the intracellular concentration of adenosylhomocysteine. This Nicotiana sylvestris (Wood tobacco) protein is Adenosylhomocysteinase (SAHH).